Reading from the N-terminus, the 257-residue chain is Thiazole synthase (257 aa).

The active-site Schiff-base intermediate with DXP is the Lys-96. 1-deoxy-D-xylulose 5-phosphate is bound by residues Gly-157, 184-185, and 206-207; these read AG and NT.

The protein belongs to the ThiG family. Homotetramer. Forms heterodimers with either ThiH or ThiS.

Its subcellular location is the cytoplasm. The catalysed reaction is [ThiS sulfur-carrier protein]-C-terminal-Gly-aminoethanethioate + 2-iminoacetate + 1-deoxy-D-xylulose 5-phosphate = [ThiS sulfur-carrier protein]-C-terminal Gly-Gly + 2-[(2R,5Z)-2-carboxy-4-methylthiazol-5(2H)-ylidene]ethyl phosphate + 2 H2O + H(+). Its pathway is cofactor biosynthesis; thiamine diphosphate biosynthesis. Functionally, catalyzes the rearrangement of 1-deoxy-D-xylulose 5-phosphate (DXP) to produce the thiazole phosphate moiety of thiamine. Sulfur is provided by the thiocarboxylate moiety of the carrier protein ThiS. In vitro, sulfur can be provided by H(2)S. The sequence is that of Thiazole synthase from Rhizobium etli (strain ATCC 51251 / DSM 11541 / JCM 21823 / NBRC 15573 / CFN 42).